The primary structure comprises 98 residues: NADH-ubiquinone oxidoreductase chain 4L (98 aa).

A run of 3 helical transmembrane segments spans residues 1–21, 29–49, and 61–81; these read MPVV…GLLI, SLLC…VTVL, and IILL…LVMV.

The protein belongs to the complex I subunit 4L family. As to quaternary structure, core subunit of respiratory chain NADH dehydrogenase (Complex I) which is composed of 45 different subunits.

Its subcellular location is the mitochondrion inner membrane. The enzyme catalyses a ubiquinone + NADH + 5 H(+)(in) = a ubiquinol + NAD(+) + 4 H(+)(out). Functionally, core subunit of the mitochondrial membrane respiratory chain NADH dehydrogenase (Complex I) which catalyzes electron transfer from NADH through the respiratory chain, using ubiquinone as an electron acceptor. Part of the enzyme membrane arm which is embedded in the lipid bilayer and involved in proton translocation. This Helarctos malayanus (Malayan sun bear) protein is NADH-ubiquinone oxidoreductase chain 4L (MT-ND4L).